Reading from the N-terminus, the 237-residue chain is Small ribosomal subunit protein uS17m (237 aa).

This sequence belongs to the universal ribosomal protein uS17 family. Component of the mitochondrial small ribosomal subunit (mt-SSU). Mature yeast 74S mitochondrial ribosomes consist of a small (37S) and a large (54S) subunit. The 37S small subunit contains a 15S ribosomal RNA (15S mt-rRNA) and 34 different proteins. The 54S large subunit contains a 21S rRNA (21S mt-rRNA) and 46 different proteins.

It is found in the mitochondrion. Its function is as follows. Component of the mitochondrial ribosome (mitoribosome), a dedicated translation machinery responsible for the synthesis of mitochondrial genome-encoded proteins, including at least some of the essential transmembrane subunits of the mitochondrial respiratory chain. The mitoribosomes are attached to the mitochondrial inner membrane and translation products are cotranslationally integrated into the membrane. uS17m may have a meiosis-specific role as it accumulates during the middle stage of sporulation. The sequence is that of Small ribosomal subunit protein uS17m (MRPS17) from Saccharomyces cerevisiae (strain ATCC 204508 / S288c) (Baker's yeast).